Consider the following 403-residue polypeptide: Coenzyme A biosynthesis bifunctional protein CoaBC (403 aa).

The phosphopantothenoylcysteine decarboxylase stretch occupies residues 1 to 197 (MLHHVKLIYA…LHPKSLEGKR (197 aa)). The tract at residues 198 to 403 (VLVTAGATRE…RLWDEIEKML (206 aa)) is phosphopantothenate--cysteine ligase. CTP-binding residues include aspartate 287, lysine 297, and phenylalanine 330.

The protein in the N-terminal section; belongs to the HFCD (homo-oligomeric flavin containing Cys decarboxylase) superfamily. It in the C-terminal section; belongs to the PPC synthetase family. Mg(2+) serves as cofactor. FMN is required as a cofactor.

The catalysed reaction is N-[(R)-4-phosphopantothenoyl]-L-cysteine + H(+) = (R)-4'-phosphopantetheine + CO2. The enzyme catalyses (R)-4'-phosphopantothenate + L-cysteine + CTP = N-[(R)-4-phosphopantothenoyl]-L-cysteine + CMP + diphosphate + H(+). It functions in the pathway cofactor biosynthesis; coenzyme A biosynthesis. Catalyzes two sequential steps in the biosynthesis of coenzyme A. In the first step cysteine is conjugated to 4'-phosphopantothenate to form 4-phosphopantothenoylcysteine. In the second step the latter compound is decarboxylated to form 4'-phosphopantotheine. The chain is Coenzyme A biosynthesis bifunctional protein CoaBC from Thermococcus kodakarensis (strain ATCC BAA-918 / JCM 12380 / KOD1) (Pyrococcus kodakaraensis (strain KOD1)).